A 626-amino-acid chain; its full sequence is tRNA uridine 5-carboxymethylaminomethyl modification enzyme MnmG (626 aa).

13–18 (GGGHAG) is a binding site for FAD. Position 273-287 (273-287 (GPRYCPSIEDKIHRF)) interacts with NAD(+).

Belongs to the MnmG family. Homodimer. Heterotetramer of two MnmE and two MnmG subunits. FAD is required as a cofactor.

The protein resides in the cytoplasm. NAD-binding protein involved in the addition of a carboxymethylaminomethyl (cmnm) group at the wobble position (U34) of certain tRNAs, forming tRNA-cmnm(5)s(2)U34. This Acinetobacter baumannii (strain SDF) protein is tRNA uridine 5-carboxymethylaminomethyl modification enzyme MnmG.